Consider the following 122-residue polypeptide: Large ribosomal subunit protein uL14 (122 aa).

This sequence belongs to the universal ribosomal protein uL14 family. In terms of assembly, part of the 50S ribosomal subunit. Forms a cluster with proteins L3 and L19. In the 70S ribosome, L14 and L19 interact and together make contacts with the 16S rRNA in bridges B5 and B8.

Its function is as follows. Binds to 23S rRNA. Forms part of two intersubunit bridges in the 70S ribosome. This Beutenbergia cavernae (strain ATCC BAA-8 / DSM 12333 / CCUG 43141 / JCM 11478 / NBRC 16432 / NCIMB 13614 / HKI 0122) protein is Large ribosomal subunit protein uL14.